The primary structure comprises 152 residues: ASP external chaperone (152 aa).

Positions 1 to 22 (MNKPVTLLLATLLAPLSGQLCA) are cleaved as a signal peptide.

In terms of assembly, forms a complex with the serine protease ASP in the periplasm. After translocation of the ASP-ORF2 complex from the periplasm to the extracellular space, the complex is dissociated in a pH-dependent manner.

It localises to the periplasm. The protein localises to the secreted. With respect to regulation, degraded by ASP after secretion and dissociation of the ASP-ORF2 complex. Its function is as follows. Required for the production of the active form of the Aeromonas extracellular serine protease (ASP). Acts as a chaperone that helps ASP form an active structure in the periplasm. Formation of a complex with ASP in the periplasm also inactivates the protease activity and likely protects ASP from intrinsic proteases. Dissociation of the ASP-ORF2 complex after secretion in the extracellular space generates an active ASP. The protein is ASP external chaperone of Aeromonas sobria.